The primary structure comprises 206 residues: Cytochrome c biogenesis ATP-binding export protein CcmA (206 aa).

Residues 3–206 (VSVDDLCVTR…LAGASDEAFL (204 aa)) enclose the ABC transporter domain. 35–42 (GPNGSGKT) contributes to the ATP binding site.

This sequence belongs to the ABC transporter superfamily. CcmA exporter (TC 3.A.1.107) family. In terms of assembly, the complex is composed of two ATP-binding proteins (CcmA) and two transmembrane proteins (CcmB).

The protein resides in the cell inner membrane. It catalyses the reaction heme b(in) + ATP + H2O = heme b(out) + ADP + phosphate + H(+). In terms of biological role, part of the ABC transporter complex CcmAB involved in the biogenesis of c-type cytochromes; once thought to export heme, this seems not to be the case, but its exact role is uncertain. Responsible for energy coupling to the transport system. This Roseobacter denitrificans (strain ATCC 33942 / OCh 114) (Erythrobacter sp. (strain OCh 114)) protein is Cytochrome c biogenesis ATP-binding export protein CcmA.